A 486-amino-acid polypeptide reads, in one-letter code: Galactose-3-O-sulfotransferase 4 (486 aa).

The Cytoplasmic portion of the chain corresponds to Met-1–Leu-18. Residues Gly-19–Phe-39 traverse the membrane as a helical; Signal-anchor for type II membrane protein segment. Topologically, residues Gln-40–Pro-486 are lumenal. Asn-374 carries N-linked (GlcNAc...) asparagine glycosylation.

Belongs to the galactose-3-O-sulfotransferase family. Mn(2+) is required as a cofactor. Expressed mainly in placenta, thymus, testis, ovary, spinal cord, trachea and adrenal gland and at low levels in brain, lung, spleen, prostate, small intestine, colon, stomach thyroid and lymph node.

The protein resides in the golgi apparatus. Its subcellular location is the golgi stack membrane. The protein operates within protein modification; carbohydrate sulfation. Functionally, catalyzes the transfer of sulfate to beta-1,3-linked galactose residues in O-linked glycoproteins. Good substrates include asialofetuin, Gal-beta-1,3-GalNAc and Gal-beta-1,3 (GlcNAc-beta-1,6)GalNAc. The protein is Galactose-3-O-sulfotransferase 4 (GAL3ST4) of Homo sapiens (Human).